Reading from the N-terminus, the 660-residue chain is DNA mismatch repair protein MutL (660 aa).

Belongs to the DNA mismatch repair MutL/HexB family.

Its function is as follows. This protein is involved in the repair of mismatches in DNA. It is required for dam-dependent methyl-directed DNA mismatch repair. May act as a 'molecular matchmaker', a protein that promotes the formation of a stable complex between two or more DNA-binding proteins in an ATP-dependent manner without itself being part of a final effector complex. The protein is DNA mismatch repair protein MutL of Streptococcus equi subsp. zooepidemicus (strain H70).